The chain runs to 379 residues: Putative glutamate--cysteine ligase 2 (379 aa).

Belongs to the glutamate--cysteine ligase type 2 family. YbdK subfamily.

It carries out the reaction L-cysteine + L-glutamate + ATP = gamma-L-glutamyl-L-cysteine + ADP + phosphate + H(+). Functionally, ATP-dependent carboxylate-amine ligase which exhibits weak glutamate--cysteine ligase activity. In Roseiflexus sp. (strain RS-1), this protein is Putative glutamate--cysteine ligase 2.